The chain runs to 83 residues: MASDVRGRRKTKIGVVVSSKMEKTVVVRVERVYSHPQYAKVVRDSSKYYAHNELDVKEGDTVRIQETRPLSKTKRWRVVDRVN.

This sequence belongs to the universal ribosomal protein uS17 family. Part of the 30S ribosomal subunit.

In terms of biological role, one of the primary rRNA binding proteins, it binds specifically to the 5'-end of 16S ribosomal RNA. The sequence is that of Small ribosomal subunit protein uS17 from Chlamydia muridarum (strain MoPn / Nigg).